A 209-amino-acid polypeptide reads, in one-letter code: Large ribosomal subunit protein uL4 (209 aa).

The disordered stretch occupies residues 46 to 72 (GTSSTKTRSEVRGSSKKPWKQKGTGRA). Positions 59–72 (SSKKPWKQKGTGRA) are enriched in basic residues.

It belongs to the universal ribosomal protein uL4 family. Part of the 50S ribosomal subunit.

Its function is as follows. One of the primary rRNA binding proteins, this protein initially binds near the 5'-end of the 23S rRNA. It is important during the early stages of 50S assembly. It makes multiple contacts with different domains of the 23S rRNA in the assembled 50S subunit and ribosome. Forms part of the polypeptide exit tunnel. In Borreliella burgdorferi (strain ATCC 35210 / DSM 4680 / CIP 102532 / B31) (Borrelia burgdorferi), this protein is Large ribosomal subunit protein uL4.